The primary structure comprises 454 residues: tRNA modification GTPase MnmE (454 aa).

Residues R23, E80, and K120 each coordinate (6S)-5-formyl-5,6,7,8-tetrahydrofolate. A TrmE-type G domain is found at 216-377 (GMKVVIAGRP…LRDHLKQSMG (162 aa)). N226 is a K(+) binding site. Residues 226–231 (NAGKSS), 245–251 (TDIAGTT), 270–273 (DTAG), 335–338 (NKAD), and 358–360 (SAR) each bind GTP. S230 is a binding site for Mg(2+). Positions 245, 247, and 250 each coordinate K(+). T251 contacts Mg(2+). K454 contacts (6S)-5-formyl-5,6,7,8-tetrahydrofolate.

Belongs to the TRAFAC class TrmE-Era-EngA-EngB-Septin-like GTPase superfamily. TrmE GTPase family. In terms of assembly, homodimer. Heterotetramer of two MnmE and two MnmG subunits. Requires K(+) as cofactor.

The protein localises to the cytoplasm. Exhibits a very high intrinsic GTPase hydrolysis rate. Involved in the addition of a carboxymethylaminomethyl (cmnm) group at the wobble position (U34) of certain tRNAs, forming tRNA-cmnm(5)s(2)U34. The chain is tRNA modification GTPase MnmE from Yersinia pestis bv. Antiqua (strain Antiqua).